The chain runs to 363 residues: Lovastatin nonaketide synthase, enoyl reductase component lovC (363 aa).

Residues 51 to 54 (SDTK), 174 to 177 (STAT), 197 to 200 (SPHN), tyrosine 215, 262 to 263 (LN), threonine 280, and 351 to 352 (LS) each bind NADP(+). The segment at 226 to 272 (TYTKNNLRYALDCITNVESTTFCFAAIGRAGGHYVSLNPFPEHAATR) is lovB-binding.

It belongs to the zinc-containing alcohol dehydrogenase family. Each MAT domain from the lovB homodimer binds one lovC molecule to form the final active lovB-lovC megasynthase complex.

The catalysed reaction is holo-[lovastatin nonaketide synthase] + 9 malonyl-CoA + S-adenosyl-L-methionine + 11 NADPH + 19 H(+) = dihydromonacolin L-[lovastatin nonaketide synthase] + S-adenosyl-L-homocysteine + 9 CO2 + 11 NADP(+) + 9 CoA + 6 H2O. It functions in the pathway polyketide biosynthesis; lovastatin biosynthesis. Trans-enoyl reductase; part of the gene cluster that mediates the biosynthesis of lovastatin (also known as mevinolin, mevacor or monacolin K), a hypolipidemic inhibitor of (3S)-hydroxymethylglutaryl-coenzyme A (HMG-CoA) reductase (HMGR). The first step in the biosynthesis of lovastatin is the production of dihydromonacolin L acid (DML) by the lovastatin nonaketide synthase lovB and the trans-acting enoyl reductase lovC (called the lovB-lovC megasynthase complex) via condensation of one acetyl-CoA unit and 8 malonyl-CoA units. The formation of the LovB/C complex is essential for the integrity of the catalytic chamber to the complete total synthesis of DML acid. Dihydromonacolin L acid is released from lovB by the thioesterase lovG. Next, dihydromonacolin L acid is oxidized by the dihydromonacolin L monooxygenase lovA twice to form monacolin J acid. The 2-methylbutyrate moiety of lovastatin is synthesized by the lovastatin diketide synthase lovF via condensation of one acetyl-CoA unit and one malonyl-CoA unit. Finally, the covalent attachment of this moiety to monacolin J acid is catalyzed by the transesterase lovD to yield lovastatin. LovD has broad substrate specificity and can also convert monacolin J to simvastatin using alpha-dimethylbutanoyl-S-methyl-3-mercaptopropionate (DMB-S-MMP) as the thioester acyl donor, and can also catalyze the reverse reaction and function as hydrolase in vitro. LovD has much higher activity with LovF-bound 2-methylbutanoate than with free diketide substrates. The chain is Lovastatin nonaketide synthase, enoyl reductase component lovC from Aspergillus terreus.